The sequence spans 131 residues: ATP synthase epsilon chain, chloroplastic (131 aa).

This sequence belongs to the ATPase epsilon chain family. F-type ATPases have 2 components, CF(1) - the catalytic core - and CF(0) - the membrane proton channel. CF(1) has five subunits: alpha(3), beta(3), gamma(1), delta(1), epsilon(1). CF(0) has three main subunits: a, b and c.

The protein localises to the plastid. The protein resides in the chloroplast thylakoid membrane. Its function is as follows. Produces ATP from ADP in the presence of a proton gradient across the membrane. This Oltmannsiellopsis viridis (Marine flagellate) protein is ATP synthase epsilon chain, chloroplastic.